The chain runs to 514 residues: DNA damage-binding protein CMR1 (514 aa).

Positions 26-116 (NLDSLSQSIK…VKQEEKEELS (91 aa)) are disordered. Residues 34–44 (IKRELPRASET) show a composition bias toward basic and acidic residues. Residues 45-55 (KKRKTTPRTKA) show a composition bias toward basic residues. 2 stretches are compositionally biased toward basic and acidic residues: residues 56–65 (VKKEDVEPSR) and 92–116 (KFEDKVIKSDSTEPEVKQEEKEELS). WD repeat units lie at residues 180–221 (ISHT…DDSE), 229–269 (PHGK…STEV), 280–320 (DYAL…KPLK), 327–367 (LHDK…KANA), 385–423 (SSRLSVSCVDWNSENRLVCNGYDDYINIFDLNEESLIPD), 438–481 (GRWV…IAHL), and 483–514 (DSVGAVPAVCGFHPTKNWVVGGSASGKVYLFE).

It belongs to the WD repeat DDB2/WDR76 family.

Its function is as follows. DNA-binding protein that binds to both single- and double-stranded DNA. Binds preferentially to UV-damaged DNA. May be involved in DNA-metabolic processes. The polypeptide is DNA damage-binding protein CMR1 (PRW1) (Scheffersomyces stipitis (strain ATCC 58785 / CBS 6054 / NBRC 10063 / NRRL Y-11545) (Yeast)).